Consider the following 568-residue polypeptide: Clathrin coat assembly protein AP180B (568 aa).

The ENTH domain occupies 1 to 127 (MSSLYTKLVK…EEYGRLGMDH (127 aa)). Positions 262–283 (HLREETKRQRGEPSEPQQDRKP) are enriched in basic and acidic residues. The interval 262-302 (HLREETKRQRGEPSEPQQDRKPSTAISSTSSHNNNSNDKNK) is disordered. K282 is covalently cross-linked (Glycyl lysine isopeptide (Lys-Gly) (interchain with G-Cter in ubiquitin)). The span at 284–298 (STAISSTSSHNNNSN) shows a compositional bias: low complexity. T449 is subject to Phosphothreonine.

Belongs to the AP180 family. As to quaternary structure, interacts with PAN1 and the clathrin heavy and light chains CHC1 and CLC1.

The protein resides in the bud. Its subcellular location is the bud neck. The protein localises to the cell membrane. It localises to the cytoplasm. Involved in endocytosis and clathrin cage assembly. The sequence is that of Clathrin coat assembly protein AP180B (YAP1802) from Saccharomyces cerevisiae (strain ATCC 204508 / S288c) (Baker's yeast).